Consider the following 152-residue polypeptide: Large ribosomal subunit protein uL15 (152 aa).

Residues 1-55 (MRLHELKPNEGATHKKKRVGRGIGSGHGKTSTKGQKGQTSRSGDSKLPARFEGGQ) form a disordered region. Positions 28–42 (GKTSTKGQKGQTSRS) are enriched in polar residues.

The protein belongs to the universal ribosomal protein uL15 family. Part of the 50S ribosomal subunit.

Functionally, binds to the 23S rRNA. The chain is Large ribosomal subunit protein uL15 from Sulfurihydrogenibium sp. (strain YO3AOP1).